The primary structure comprises 367 residues: Ganglioside-induced differentiation-associated protein 1-like 1 (367 aa).

The 82-residue stretch at 45–126 folds into the GST N-terminal domain; that stretch reads ESLVLYHWTQ…YVERTFTGEH (82 aa). The GST C-terminal domain maps to 174 to 341; the sequence is PKYATAEIRR…RLVKRKPPSF (168 aa).

This sequence belongs to the GST superfamily.

This Homo sapiens (Human) protein is Ganglioside-induced differentiation-associated protein 1-like 1 (GDAP1L1).